The primary structure comprises 513 residues: Histidine ammonia-lyase (513 aa).

Residues 142 to 144 (ASG) constitute a cross-link (5-imidazolinone (Ala-Gly)). Ser143 carries the post-translational modification 2,3-didehydroalanine (Ser).

This sequence belongs to the PAL/histidase family. Post-translationally, contains an active site 4-methylidene-imidazol-5-one (MIO), which is formed autocatalytically by cyclization and dehydration of residues Ala-Ser-Gly.

The protein localises to the cytoplasm. It carries out the reaction L-histidine = trans-urocanate + NH4(+). It functions in the pathway amino-acid degradation; L-histidine degradation into L-glutamate; N-formimidoyl-L-glutamate from L-histidine: step 1/3. In Methylobacterium sp. (strain 4-46), this protein is Histidine ammonia-lyase.